The chain runs to 399 residues: 3-dehydroquinate synthase (399 aa).

It belongs to the archaeal-type DHQ synthase family.

It carries out the reaction 2-amino-2,3,7-trideoxy-D-lyxo-hept-6-ulosonate + NAD(+) + H2O = 3-dehydroquinate + NH4(+) + NADH + H(+). Its function is as follows. Catalyzes the oxidative deamination and cyclization of 2-amino-3,7-dideoxy-D-threo-hept-6-ulosonic acid (ADH) to yield 3-dehydroquinate (DHQ), which is fed into the canonical shikimic pathway of aromatic amino acid biosynthesis. The polypeptide is 3-dehydroquinate synthase (Haloquadratum walsbyi (strain DSM 16790 / HBSQ001)).